A 111-amino-acid chain; its full sequence is Aspartate 1-decarboxylase (111 aa).

Catalysis depends on Ser-25, which acts as the Schiff-base intermediate with substrate; via pyruvic acid. Ser-25 carries the post-translational modification Pyruvic acid (Ser). Residue Thr-57 participates in substrate binding. The Proton donor role is filled by Tyr-58. Substrate is bound at residue 73 to 75 (GPA).

It belongs to the PanD family. Heterooctamer of four alpha and four beta subunits. Pyruvate is required as a cofactor. Is synthesized initially as an inactive proenzyme, which is activated by self-cleavage at a specific serine bond to produce a beta-subunit with a hydroxyl group at its C-terminus and an alpha-subunit with a pyruvoyl group at its N-terminus.

The protein localises to the cytoplasm. The catalysed reaction is L-aspartate + H(+) = beta-alanine + CO2. It participates in cofactor biosynthesis; (R)-pantothenate biosynthesis; beta-alanine from L-aspartate: step 1/1. Functionally, catalyzes the pyruvoyl-dependent decarboxylation of aspartate to produce beta-alanine. The sequence is that of Aspartate 1-decarboxylase from Francisella tularensis subsp. tularensis (strain FSC 198).